A 334-amino-acid polypeptide reads, in one-letter code: Protein-methionine-sulfoxide reductase catalytic subunit MsrP (334 aa).

The segment at residues 1–44 (MKKNQFLKESDVTAESVFFMKRRQVLKALGISAAALSLPHAAHA) is a signal peptide (tat-type signal). Mo-molybdopterin contacts are provided by residues Asn-88, 91-92 (YE), Cys-146, Thr-181, Asn-233, Arg-238, and 249-251 (GIK).

Belongs to the MsrP family. Heterodimer of a catalytic subunit (MsrP) and a heme-binding subunit (MsrQ). The cofactor is Mo-molybdopterin. In terms of processing, predicted to be exported by the Tat system. The position of the signal peptide cleavage has not been experimentally proven.

The protein resides in the periplasm. It carries out the reaction L-methionyl-[protein] + a quinone + H2O = L-methionyl-(S)-S-oxide-[protein] + a quinol. It catalyses the reaction L-methionyl-[protein] + a quinone + H2O = L-methionyl-(R)-S-oxide-[protein] + a quinol. Part of the MsrPQ system that repairs oxidized periplasmic proteins containing methionine sulfoxide residues (Met-O), using respiratory chain electrons. Thus protects these proteins from oxidative-stress damage caused by reactive species of oxygen and chlorine generated by the host defense mechanisms. MsrPQ is essential for the maintenance of envelope integrity under bleach stress, rescuing a wide series of structurally unrelated periplasmic proteins from methionine oxidation, including the primary periplasmic chaperone SurA and the lipoprotein Pal. The catalytic subunit MsrP is non-stereospecific, being able to reduce both (R-) and (S-) diastereoisomers of methionine sulfoxide. The polypeptide is Protein-methionine-sulfoxide reductase catalytic subunit MsrP (Escherichia coli O157:H7).